Consider the following 277-residue polypeptide: Sulfur carrier protein FdhD (277 aa).

The Cysteine persulfide intermediate role is filled by Cys123. 263-268 (FVRGNK) provides a ligand contact to Mo-bis(molybdopterin guanine dinucleotide).

It belongs to the FdhD family.

It localises to the cytoplasm. Its function is as follows. Required for formate dehydrogenase (FDH) activity. Acts as a sulfur carrier protein that transfers sulfur from IscS to the molybdenum cofactor prior to its insertion into FDH. The protein is Sulfur carrier protein FdhD of Corynebacterium efficiens (strain DSM 44549 / YS-314 / AJ 12310 / JCM 11189 / NBRC 100395).